The chain runs to 267 residues: L-aspartate dehydrogenase (267 aa).

Residues Ala124 and Asn190 each coordinate NAD(+). The active site involves His220.

The protein belongs to the L-aspartate dehydrogenase family.

It carries out the reaction L-aspartate + NADP(+) + H2O = oxaloacetate + NH4(+) + NADPH + H(+). The catalysed reaction is L-aspartate + NAD(+) + H2O = oxaloacetate + NH4(+) + NADH + H(+). It functions in the pathway cofactor biosynthesis; NAD(+) biosynthesis; iminoaspartate from L-aspartate (dehydrogenase route): step 1/1. Functionally, specifically catalyzes the NAD or NADP-dependent dehydrogenation of L-aspartate to iminoaspartate. The sequence is that of L-aspartate dehydrogenase from Ralstonia pickettii (strain 12J).